The sequence spans 631 residues: Probable protein phosphatase 2C 31 (631 aa).

Disordered stretches follow at residues 119–142 (GPLH…SDRF) and 205–231 (LSGR…PKGN). The segment covering 131–140 (ASGSASTASD) has biased composition (polar residues). The PPM-type phosphatase domain occupies 221 to 622 (DGDYRSTPKG…DDVSIIVMSF (402 aa)). Mn(2+) is bound by residues aspartate 261 and glycine 262. The tract at residues 324–347 (GGDDDPDAERKAKRGRIERNADDD) is disordered. Mn(2+) is bound by residues aspartate 550 and aspartate 613.

It belongs to the PP2C family. Requires Mg(2+) as cofactor. Mn(2+) serves as cofactor.

It carries out the reaction O-phospho-L-seryl-[protein] + H2O = L-seryl-[protein] + phosphate. It catalyses the reaction O-phospho-L-threonyl-[protein] + H2O = L-threonyl-[protein] + phosphate. This is Probable protein phosphatase 2C 31 from Oryza sativa subsp. japonica (Rice).